The following is a 304-amino-acid chain: Proteasome subunit beta (304 aa).

Positions 1–65 (MTWPHFEQLA…LTPTDAVPHG (65 aa)) are cleaved as a propeptide — removed in mature form; by autocatalysis. The Nucleophile role is filled by threonine 66.

Belongs to the peptidase T1B family. The 20S proteasome core is composed of 14 alpha and 14 beta subunits that assemble into four stacked heptameric rings, resulting in a barrel-shaped structure. The two inner rings, each composed of seven catalytic beta subunits, are sandwiched by two outer rings, each composed of seven alpha subunits. The catalytic chamber with the active sites is on the inside of the barrel. Has a gated structure, the ends of the cylinder being occluded by the N-termini of the alpha-subunits. Is capped by the proteasome-associated ATPase, ARC.

Its subcellular location is the cytoplasm. The enzyme catalyses Cleavage of peptide bonds with very broad specificity.. It participates in protein degradation; proteasomal Pup-dependent pathway. Its activity is regulated as follows. The formation of the proteasomal ATPase ARC-20S proteasome complex, likely via the docking of the C-termini of ARC into the intersubunit pockets in the alpha-rings, may trigger opening of the gate for substrate entry. Interconversion between the open-gate and close-gate conformations leads to a dynamic regulation of the 20S proteasome proteolysis activity. Functionally, component of the proteasome core, a large protease complex with broad specificity involved in protein degradation. This chain is Proteasome subunit beta, found in Mycobacterium sp. (strain JLS).